We begin with the raw amino-acid sequence, 212 residues long: 3-oxo-tetronate 4-phosphate decarboxylase (212 aa).

Glu-79 serves as the catalytic Proton acceptor. 3 residues coordinate Zn(2+): Glu-79, His-98, and His-100. The active-site Proton donor is the Tyr-125. A Zn(2+)-binding site is contributed by His-165.

It belongs to the aldolase class II family. AraD/FucA subfamily. The cofactor is Zn(2+).

It catalyses the reaction 3-dehydro-4-O-phospho-D-erythronate + H(+) = dihydroxyacetone phosphate + CO2. The catalysed reaction is 3-dehydro-4-O-phospho-L-erythronate + H(+) = dihydroxyacetone phosphate + CO2. Catalyzes the decarboxylation of 3-oxo-tetronate 4-phosphate to dihydroxyacetone phosphate (DHAP) and CO(2). In Escherichia coli (strain K12), this protein is 3-oxo-tetronate 4-phosphate decarboxylase.